The primary structure comprises 79 residues: MTDIIVTQTLNTIGLRCPEPIMLLRKKIRHMQEGETLLILADDPATTRDIPSFCQFMDHNLLKSDLENTPFKYWIKKGK.

The active-site Cysteine persulfide intermediate is the Cys17.

Belongs to the sulfur carrier protein TusA family.

The protein localises to the cytoplasm. Sulfur carrier protein which probably makes part of a sulfur-relay system. This Histophilus somni (strain 129Pt) (Haemophilus somnus) protein is Sulfur carrier protein TusA.